Reading from the N-terminus, the 181-residue chain is Peptide deformylase (181 aa).

The Fe cation site is built by cysteine 99 and histidine 141. Glutamate 142 is an active-site residue. Histidine 145 serves as a coordination point for Fe cation.

The protein belongs to the polypeptide deformylase family. It depends on Fe(2+) as a cofactor.

The enzyme catalyses N-terminal N-formyl-L-methionyl-[peptide] + H2O = N-terminal L-methionyl-[peptide] + formate. Functionally, removes the formyl group from the N-terminal Met of newly synthesized proteins. Requires at least a dipeptide for an efficient rate of reaction. N-terminal L-methionine is a prerequisite for activity but the enzyme has broad specificity at other positions. The polypeptide is Peptide deformylase (Chlamydia muridarum (strain MoPn / Nigg)).